Here is a 2430-residue protein sequence, read N- to C-terminus: Transcription factor HIVEP2 (2430 aa).

The segment at 1 to 127 (MDTGDTALGQ…SLEGPPWLFP (127 aa)) is disordered. Polar residues-rich tracts occupy residues 11–22 (KATSRSGETDSV) and 96–110 (HSLS…QGMT). C2H2-type zinc fingers lie at residues 189-211 (YICP…IRSH) and 217-239 (YPCI…RKSH). Disordered stretches follow at residues 271 to 302 (IHSD…PPVP), 374 to 418 (SEKK…NTNA), and 744 to 995 (AHGH…SGKH). Over residues 381-418 (SEPSLNLLSPHSKGSTDSGYFSRSESAEQQISPPNTNA) the composition is skewed to polar residues. 2 stretches are compositionally biased toward basic and acidic residues: residues 744–753 (AHGHSDRLDP) and 775–784 (DPDKMTDLGK). The segment covering 792 to 804 (SVIQHTNSLSRPN) has biased composition (polar residues). Ser-811 carries the phosphoserine modification. Over residues 853–863 (SKPTPSQQVPQ) the composition is skewed to polar residues. The span at 884 to 908 (RVTEEPDKPEKEKEAPTKEPEKPVE) shows a compositional bias: basic and acidic residues. The Nuclear localization signal motif lies at 929–935 (PKKKRLR). Phosphoserine occurs at positions 942, 947, 1040, 1431, and 1435. The span at 944–974 (GESSFESTGTGLSRSPSQESNLSHSSSFSMS) shows a compositional bias: low complexity. Residues 1472 to 1584 (KKGLSRPQKP…GGQQEEEGKA (113 aa)) are disordered. 2 stretches are compositionally biased toward low complexity: residues 1499–1520 (SRSS…SASG) and 1560–1569 (SDMSMSPQSS). 2 C2H2-type zinc fingers span residues 1783–1805 (YICE…IRTH) and 1811–1835 (YVCK…SKAH). Disordered stretches follow at residues 1848 to 1931 (SVDD…SSLP) and 1986 to 2117 (FQSK…SPRR). The segment covering 1850 to 1860 (DDTETEEAENM) has biased composition (acidic residues). The span at 1861-1871 (EELHKTSEKHS) shows a compositional bias: basic and acidic residues. The span at 1883–1909 (DAEESDGEDGDDNDDDDEDDDDFDDQG) shows a compositional bias: acidic residues. Residues 1991–2001 (TDSEPDKDRLD) show a composition bias toward basic and acidic residues. Positions 2013-2037 (SSEPSSSPRDFSPSSYRSSPGYDSS) are enriched in low complexity. Tandem repeats lie at residues 2037–2040 (SPCR), 2043–2046 (SPKR), 2055–2058 (SPRR), 2067–2070 (SPMR), 2073–2076 (SPRK), 2090–2093 (SPRR), 2096–2099 (SPRR), 2102–2105 (SPGK), 2114–2117 (SPRR), and 2129–2132 (SPRR). The interval 2037–2132 (SPCRDNSPKR…TTIRAPSPRR (96 aa)) is 10 X 4 AA tandem repeats of S-P-[RGMKC]-[RK]. The span at 2062–2085 (PRRDLSPMRHLSPRKEAALRREMS) shows a compositional bias: basic and acidic residues. A Phosphoserine modification is found at Ser-2102. A compositionally biased stretch (basic and acidic residues) spans 2107 to 2116 (ITARRDLSPR). Disordered regions lie at residues 2226-2252 (PALS…GAPG), 2268-2309 (KQAP…QEEN), and 2352-2430 (SIRH…NQLH). A compositionally biased stretch (low complexity) spans 2271 to 2289 (PQVLQSSGLPSSPSSPRLL). A phosphoserine mark is found at Ser-2281 and Ser-2285. The span at 2291-2301 (KQSTSEDSLNS) shows a compositional bias: polar residues. A compositionally biased stretch (basic and acidic residues) spans 2371–2380 (PDLHDGEKDT). Positions 2406–2417 (FQSSKELSLSTE) are enriched in polar residues. Phosphoserine is present on residues Ser-2413 and Ser-2415.

In terms of assembly, interacts with TCF4. In terms of tissue distribution, expressed in heart, lung, skeletal muscle and liver. In the brain expressed in cerebral cortex, hippocampus, corpora amygdala and cerebellar cortex.

The protein resides in the nucleus. Its function is as follows. Specifically binds to the DNA sequence 5'-GGGACTTTCC-3' which is found in the enhancer elements of numerous viral promoters such as those of SV40, CMV, or HIV1. In addition, related sequences are found in the enhancer elements of a number of cellular promoters, including those of the class I MHC, interleukin-2 receptor, somatostatin receptor II, and interferon-beta genes. It may act in T-cell activation. This is Transcription factor HIVEP2 (Hivep2) from Mus musculus (Mouse).